The primary structure comprises 380 residues: Chaperone protein DnaJ (380 aa).

A J domain is found at D5 to G70. A CR-type zinc finger spans residues G137 to E215. Zn(2+) contacts are provided by C150, C153, C167, C170, C189, C192, C203, and C206. CXXCXGXG motif repeat units follow at residues C150–G157, C167–G174, C189–G196, and C203–G210.

The protein belongs to the DnaJ family. As to quaternary structure, homodimer. Zn(2+) is required as a cofactor.

It localises to the cytoplasm. In terms of biological role, participates actively in the response to hyperosmotic and heat shock by preventing the aggregation of stress-denatured proteins and by disaggregating proteins, also in an autonomous, DnaK-independent fashion. Unfolded proteins bind initially to DnaJ; upon interaction with the DnaJ-bound protein, DnaK hydrolyzes its bound ATP, resulting in the formation of a stable complex. GrpE releases ADP from DnaK; ATP binding to DnaK triggers the release of the substrate protein, thus completing the reaction cycle. Several rounds of ATP-dependent interactions between DnaJ, DnaK and GrpE are required for fully efficient folding. Also involved, together with DnaK and GrpE, in the DNA replication of plasmids through activation of initiation proteins. The chain is Chaperone protein DnaJ from Methylobacterium radiotolerans (strain ATCC 27329 / DSM 1819 / JCM 2831 / NBRC 15690 / NCIMB 10815 / 0-1).